Here is a 306-residue protein sequence, read N- to C-terminus: Tricarboxylate transporter FUM11 (306 aa).

Solcar repeat units lie at residues 18–98, 109–195, and 206–292; these read SDTL…YQKL, FGIL…LKQV, and IGTV…VVEG. 6 helical membrane-spanning segments follow: residues 24–44, 67–87, 113–133, 170–189, 209–229, and 267–286; these read LVAGSVAGGLEIAITYPAEFA, GLQWYSGCIPFLIGNSVKTSI, LAGFGAGATESLLAVTPSERI, GFWPTTARQSAGSAIRLGSY, VKTFIIGSLAGLITVYLTQPL, and GAVARSLRLVMSGGIVFMVY.

Belongs to the mitochondrial carrier (TC 2.A.29) family.

It is found in the mitochondrion inner membrane. It functions in the pathway mycotoxin biosynthesis. Its function is as follows. Tricarboxylate transporter; part of the gene cluster that mediates the biosynthesis of fumonisins B1 (FB1), B2 (FB2), B3 (FB3), and B4 (FB4), which are carcinogenic mycotoxins. Within the pathway, FUM11 is involved the addition of the tricarballylic moieties to the carbon backbone. FUM11 makes a tricarboxylic acid precursor available for fumonisin biosynthesis via its export from the mitochondria. The biosynthesis starts with the FUM1-catalyzed carbon chain assembly from one molecule of acetyl-CoA, eight molecules of malonyl-CoA, and two molecules of methionine (in S-adenosyl form). The C18 polyketide chain is released from the enzyme by a nucleophilic attack of a carbanion, which is derived from R-carbon of alanine by decarboxylation, on the carbonyl carbon of polyketide acyl chain. This step is catalyzed by the pyridoxal 5'-phosphate-dependent aminoacyl transferase FUM8. The resultant 3-keto intermediate is then stereospecifically reduced to a 3-hydroxyl product by reductase FUM13. Subsequent oxidations at C-10 by the cytochrome P450 monooxygenase FUM2, C-14 and C-15 by FUM6, FUM12 or FUM15, tricarballylic esterification of the hydroxyl groups on C-14 and C-15 by acyltransferase FUM14, and C-5 hydroxylation by 2-keto-glutarate-dependent dioxygenase FUM3 furnish the biosynthesis of fumonisins. The tricarballylic moieties are most likely derived from the citric acid cycle, and their addition to the carbon backbone may involve FUM7, FUM10, FUM11 and FUM14. The protein is Tricarboxylate transporter FUM11 of Gibberella moniliformis (strain M3125 / FGSC 7600) (Maize ear and stalk rot fungus).